The sequence spans 406 residues: Argininosuccinate synthase (406 aa).

Residues Ala10 to Ser18 and Ala37 each bind ATP. 2 residues coordinate L-citrulline: Tyr88 and Ser93. Gly118 contacts ATP. The L-aspartate site is built by Thr120, Asn124, and Asp125. Asn124 provides a ligand contact to L-citrulline. L-citrulline contacts are provided by Arg128, Ser179, Ser188, Glu264, and Tyr276.

This sequence belongs to the argininosuccinate synthase family. Type 1 subfamily. In terms of assembly, homotetramer.

It is found in the cytoplasm. It carries out the reaction L-citrulline + L-aspartate + ATP = 2-(N(omega)-L-arginino)succinate + AMP + diphosphate + H(+). It participates in amino-acid biosynthesis; L-arginine biosynthesis; L-arginine from L-ornithine and carbamoyl phosphate: step 2/3. The chain is Argininosuccinate synthase from Azotobacter vinelandii (strain DJ / ATCC BAA-1303).